The chain runs to 244 residues: Protein A47 (244 aa).

It belongs to the orthopoxvirus A47 protein family.

The protein is Protein A47 of Variola virus.